Reading from the N-terminus, the 184-residue chain is ATP synthase subunit b, chloroplastic (184 aa).

A helical membrane pass occupies residues 27 to 49 (LATNPINLSIVIGVLIFFGKGVL).

The protein belongs to the ATPase B chain family. As to quaternary structure, F-type ATPases have 2 components, F(1) - the catalytic core - and F(0) - the membrane proton channel. F(1) has five subunits: alpha(3), beta(3), gamma(1), delta(1), epsilon(1). F(0) has four main subunits: a(1), b(1), b'(1) and c(10-14). The alpha and beta chains form an alternating ring which encloses part of the gamma chain. F(1) is attached to F(0) by a central stalk formed by the gamma and epsilon chains, while a peripheral stalk is formed by the delta, b and b' chains.

It localises to the plastid. The protein localises to the chloroplast thylakoid membrane. In terms of biological role, f(1)F(0) ATP synthase produces ATP from ADP in the presence of a proton or sodium gradient. F-type ATPases consist of two structural domains, F(1) containing the extramembraneous catalytic core and F(0) containing the membrane proton channel, linked together by a central stalk and a peripheral stalk. During catalysis, ATP synthesis in the catalytic domain of F(1) is coupled via a rotary mechanism of the central stalk subunits to proton translocation. Its function is as follows. Component of the F(0) channel, it forms part of the peripheral stalk, linking F(1) to F(0). The sequence is that of ATP synthase subunit b, chloroplastic from Lotus japonicus (Lotus corniculatus var. japonicus).